The sequence spans 280 residues: MSIDSLRDSIDRLWENREGLSSATTGEARDAVEEALRLLDSGQVRVAEPKAEGGWSVNQWLKKAVLLSFRLTDSTPAPGFGPVASYDKVPLKFEGWDQARFAQGGFRVVPGAVVRRSAYIAPGVVLMPSFVNVGAYVDSGTMIDTWATVGSCAQVGKNCHISGGTGIGGVLEPLQAGPVVIEDNVFIGARSEVAEGVVVEQGSVISMGVFIGASTKIIDRATGEVLYGRVPAYSVVVPGSLPGKPLPDGTPGPSLACAVIVKRVDERTRSKTSINELLRA.

Substrate is bound by residues R107 and D144.

This sequence belongs to the transferase hexapeptide repeat family. In terms of assembly, homotrimer.

It is found in the cytoplasm. It catalyses the reaction (S)-2,3,4,5-tetrahydrodipicolinate + succinyl-CoA + H2O = (S)-2-succinylamino-6-oxoheptanedioate + CoA. Its pathway is amino-acid biosynthesis; L-lysine biosynthesis via DAP pathway; LL-2,6-diaminopimelate from (S)-tetrahydrodipicolinate (succinylase route): step 1/3. The chain is 2,3,4,5-tetrahydropyridine-2,6-dicarboxylate N-succinyltransferase from Granulibacter bethesdensis (strain ATCC BAA-1260 / CGDNIH1).